The sequence spans 314 residues: Methionyl-tRNA formyltransferase (314 aa).

Residue S111–P114 coordinates (6S)-5,6,7,8-tetrahydrofolate.

It belongs to the Fmt family.

The enzyme catalyses L-methionyl-tRNA(fMet) + (6R)-10-formyltetrahydrofolate = N-formyl-L-methionyl-tRNA(fMet) + (6S)-5,6,7,8-tetrahydrofolate + H(+). In terms of biological role, attaches a formyl group to the free amino group of methionyl-tRNA(fMet). The formyl group appears to play a dual role in the initiator identity of N-formylmethionyl-tRNA by promoting its recognition by IF2 and preventing the misappropriation of this tRNA by the elongation apparatus. This Coxiella burnetii (strain CbuG_Q212) (Coxiella burnetii (strain Q212)) protein is Methionyl-tRNA formyltransferase.